A 342-amino-acid chain; its full sequence is tRNA N6-adenosine threonylcarbamoyltransferase (342 aa).

Fe cation-binding residues include His120 and His124. Substrate is bound by residues 142–146 (VVSGG), Asp175, Gly188, Asp192, and Asn281. Asp310 serves as a coordination point for Fe cation.

It belongs to the KAE1 / TsaD family. The cofactor is Fe(2+).

The protein resides in the cytoplasm. It carries out the reaction L-threonylcarbamoyladenylate + adenosine(37) in tRNA = N(6)-L-threonylcarbamoyladenosine(37) in tRNA + AMP + H(+). Required for the formation of a threonylcarbamoyl group on adenosine at position 37 (t(6)A37) in tRNAs that read codons beginning with adenine. Is involved in the transfer of the threonylcarbamoyl moiety of threonylcarbamoyl-AMP (TC-AMP) to the N6 group of A37, together with TsaE and TsaB. TsaD likely plays a direct catalytic role in this reaction. The sequence is that of tRNA N6-adenosine threonylcarbamoyltransferase from Geobacillus kaustophilus (strain HTA426).